A 255-amino-acid chain; its full sequence is 4-hydroxy-tetrahydrodipicolinate reductase (255 aa).

Residues 9–14 (GFKGKM), Asp35, 89–91 (GTT), and 115–118 (APNF) each bind NAD(+). His145 functions as the Proton donor/acceptor in the catalytic mechanism. His146 provides a ligand contact to (S)-2,3,4,5-tetrahydrodipicolinate. Lys149 serves as the catalytic Proton donor. Position 155-156 (155-156 (GT)) interacts with (S)-2,3,4,5-tetrahydrodipicolinate.

It belongs to the DapB family.

It localises to the cytoplasm. It carries out the reaction (S)-2,3,4,5-tetrahydrodipicolinate + NAD(+) + H2O = (2S,4S)-4-hydroxy-2,3,4,5-tetrahydrodipicolinate + NADH + H(+). It catalyses the reaction (S)-2,3,4,5-tetrahydrodipicolinate + NADP(+) + H2O = (2S,4S)-4-hydroxy-2,3,4,5-tetrahydrodipicolinate + NADPH + H(+). The protein operates within amino-acid biosynthesis; L-lysine biosynthesis via DAP pathway; (S)-tetrahydrodipicolinate from L-aspartate: step 4/4. Catalyzes the conversion of 4-hydroxy-tetrahydrodipicolinate (HTPA) to tetrahydrodipicolinate. The sequence is that of 4-hydroxy-tetrahydrodipicolinate reductase from Streptococcus pneumoniae serotype 19F (strain G54).